A 452-amino-acid chain; its full sequence is Peptidoglycan DL-endopeptidase CwlO (452 aa).

An N-terminal signal peptide occupies residues 1–30 (MKKKVYTFGLASILGTASLFTPFMNNTASA). Over residues 28 to 38 (ASAETSQQKQE) the composition is skewed to polar residues. Disordered stretches follow at residues 28 to 53 (ASAE…IESK) and 258 to 317 (AAAA…GSVV). 2 stretches are compositionally biased toward basic and acidic residues: residues 39 to 53 (IQQK…IESK) and 263 to 275 (KAKE…EKSD). Over residues 276 to 317 (SGSSSSSNSGSVSKSDGSSNSGSSSSKKSSSPSRNYSSGSVV) the composition is skewed to low complexity. The region spanning 321–450 (GNAIEAAIST…KAFNGVVRRV (130 aa)) is the NlpC/P60 domain. Residue cysteine 358 is the Nucleophile of the active site. The active-site Proton acceptor is histidine 410. Asparagine 422 is an active-site residue.

Belongs to the peptidase C40 family.

Its subcellular location is the secreted. Its function is as follows. Shows a cell wall hydrolytic DL-endopeptidase activity. This is Peptidoglycan DL-endopeptidase CwlO (cwlO) from Bacillus licheniformis (strain ATCC 14580 / DSM 13 / JCM 2505 / CCUG 7422 / NBRC 12200 / NCIMB 9375 / NCTC 10341 / NRRL NRS-1264 / Gibson 46).